The chain runs to 109 residues: Ribonuclease P protein component 4 (109 aa).

4 residues coordinate Zn(2+): C65, C68, C94, and C97.

It belongs to the eukaryotic/archaeal RNase P protein component 4 family. In terms of assembly, consists of a catalytic RNA component and at least 4-5 protein subunits. Zn(2+) serves as cofactor.

Its subcellular location is the cytoplasm. It carries out the reaction Endonucleolytic cleavage of RNA, removing 5'-extranucleotides from tRNA precursor.. Functionally, part of ribonuclease P, a protein complex that generates mature tRNA molecules by cleaving their 5'-ends. This is Ribonuclease P protein component 4 from Methanococcus vannielii (strain ATCC 35089 / DSM 1224 / JCM 13029 / OCM 148 / SB).